Reading from the N-terminus, the 229-residue chain is MKLVLIRHGQSEWNKLNLFTGWHDVDLSQEGVVEAMTAGKRIKEAGLEFDVAFTSVLTRAIKTLNYVLEESDQMWVPVHKSWRLNERHYGALQGLNKQETAEKYGADQVQKWRRSYDTLPPLLEENDERQAKNDRRYQLLDTHAIPAGENLKVTLERVIPYWMDTIAPEIKEGRRVVIAAHGNSLRALVKFLEGIGDDEIMDLEIPTGVPLVYELNDDLKPVNKYYLDK.

Substrate contacts are provided by residues 7–14 (RHGQSEWN), 20–21 (TG), arginine 59, 86–89 (ERHY), lysine 97, 113–114 (RR), and 182–183 (GN). Histidine 8 acts as the Tele-phosphohistidine intermediate in catalysis. The active-site Proton donor/acceptor is the glutamate 86.

This sequence belongs to the phosphoglycerate mutase family. BPG-dependent PGAM subfamily.

It carries out the reaction (2R)-2-phosphoglycerate = (2R)-3-phosphoglycerate. It functions in the pathway carbohydrate degradation; glycolysis; pyruvate from D-glyceraldehyde 3-phosphate: step 3/5. Functionally, catalyzes the interconversion of 2-phosphoglycerate and 3-phosphoglycerate. The sequence is that of 2,3-bisphosphoglycerate-dependent phosphoglycerate mutase from Listeria monocytogenes serotype 4b (strain F2365).